The primary structure comprises 572 residues: Probable terpene synthase 13 (572 aa).

Mg(2+) is bound by residues aspartate 326, aspartate 330, and glutamate 478. A DDXXD motif motif is present at residues 326 to 330 (DDIFD).

It belongs to the terpene synthase family. Requires Mg(2+) as cofactor.

Probable sesquiterpene synthase. This chain is Probable terpene synthase 13 (TPS13), found in Ricinus communis (Castor bean).